The chain runs to 588 residues: Ufm1-specific protease (588 aa).

Catalysis depends on residues C420, D544, and H546.

This sequence belongs to the peptidase C78 family. Interacts with odr-4.

It localises to the endoplasmic reticulum membrane. The protein localises to the cytoplasm. It is found in the perinuclear region. Functionally, thiol protease which recognizes and hydrolyzes the peptide bond at the C-terminal Gly of ufm-1, a ubiquitin-like modifier protein bound to a number of target proteins. Required, with oct-4, for the localization of a subset of 7 transmembrane domain odorant receptors, including odr-10, to the cilia of olfactory neurons AWA and AWC. Operates in aggregation behavior, and responses to oxygen levels. This Caenorhabditis briggsae protein is Ufm1-specific protease.